The following is a 155-amino-acid chain: 6,7-dimethyl-8-ribityllumazine synthase (155 aa).

5-amino-6-(D-ribitylamino)uracil-binding positions include Phe24, 58 to 60, and 82 to 84; these read AFE and AII. Residue 87 to 88 coordinates (2S)-2-hydroxy-3-oxobutyl phosphate; that stretch reads AT. His90 serves as the catalytic Proton donor. Phe115 lines the 5-amino-6-(D-ribitylamino)uracil pocket. Residue Arg129 coordinates (2S)-2-hydroxy-3-oxobutyl phosphate.

Belongs to the DMRL synthase family.

It catalyses the reaction (2S)-2-hydroxy-3-oxobutyl phosphate + 5-amino-6-(D-ribitylamino)uracil = 6,7-dimethyl-8-(1-D-ribityl)lumazine + phosphate + 2 H2O + H(+). It participates in cofactor biosynthesis; riboflavin biosynthesis; riboflavin from 2-hydroxy-3-oxobutyl phosphate and 5-amino-6-(D-ribitylamino)uracil: step 1/2. Its function is as follows. Catalyzes the formation of 6,7-dimethyl-8-ribityllumazine by condensation of 5-amino-6-(D-ribitylamino)uracil with 3,4-dihydroxy-2-butanone 4-phosphate. This is the penultimate step in the biosynthesis of riboflavin. The polypeptide is 6,7-dimethyl-8-ribityllumazine synthase (Prosthecochloris aestuarii (strain DSM 271 / SK 413)).